We begin with the raw amino-acid sequence, 336 residues long: Protein-glutamate methylesterase/protein-glutamine glutaminase 2 (336 aa).

The region spanning 2–119 is the Response regulatory domain; it reads KIAIVNDMPM…PNPKEAAAPL (118 aa). Residue Asp53 is modified to 4-aspartylphosphate. The CheB-type methylesterase domain maps to 147-336; sequence PSRRDRLVAI…APRLIEVFTQ (190 aa). Catalysis depends on residues Ser159, His186, and Asp279.

It belongs to the CheB family. Phosphorylated by CheA. Phosphorylation of the N-terminal regulatory domain activates the methylesterase activity.

It is found in the cytoplasm. The enzyme catalyses [protein]-L-glutamate 5-O-methyl ester + H2O = L-glutamyl-[protein] + methanol + H(+). It catalyses the reaction L-glutaminyl-[protein] + H2O = L-glutamyl-[protein] + NH4(+). In terms of biological role, involved in chemotaxis. Part of a chemotaxis signal transduction system that modulates chemotaxis in response to various stimuli. Catalyzes the demethylation of specific methylglutamate residues introduced into the chemoreceptors (methyl-accepting chemotaxis proteins or MCP) by CheR. Also mediates the irreversible deamidation of specific glutamine residues to glutamic acid. This chain is Protein-glutamate methylesterase/protein-glutamine glutaminase 2, found in Pseudomonas syringae pv. syringae (strain B728a).